Consider the following 276-residue polypeptide: Triple specificity protein phosphatase PtpB (276 aa).

The active-site Phosphocysteine intermediate is cysteine 160. Residues 232-250 form a UIM-like region region; it reads LGVRAEYLAAARQTIDETY.

This sequence belongs to the protein-tyrosine phosphatase family. Interacts (via UIM-like region) with host ubiquitin; activating the phosphatidylinositol phosphate phosphatase activity.

The protein localises to the secreted. It localises to the host cytoplasm. It is found in the host cell membrane. It carries out the reaction O-phospho-L-tyrosyl-[protein] + H2O = L-tyrosyl-[protein] + phosphate. The enzyme catalyses O-phospho-L-seryl-[protein] + H2O = L-seryl-[protein] + phosphate. It catalyses the reaction O-phospho-L-threonyl-[protein] + H2O = L-threonyl-[protein] + phosphate. The catalysed reaction is 1,2-dioctanoyl-sn-glycero-3-phospho-(1-D-myo-inositol-3-phosphate) + H2O = 1,2-dioctanoyl-sn-glycero-3-phospho-(1D-myo-inositol) + phosphate. It carries out the reaction 1,2-dioctanoyl-sn-glycero-3-phospho-(1-D-myo-inositol-4-phosphate) + H2O = 1,2-dioctanoyl-sn-glycero-3-phospho-(1D-myo-inositol) + phosphate. The enzyme catalyses 1,2-dioctanoyl-sn-glycero-3-phospho-(1D-myo-inositol-5-phosphate) + H2O = 1,2-dioctanoyl-sn-glycero-3-phospho-(1D-myo-inositol) + phosphate. Its activity is regulated as follows. Binding to host ubiquitin is required to activate the phosphatidylinositol phosphate phosphatase activity. Phosphatase activity is inhibited by sodium orthovanadate, a specific inhibitor of tyrosine phosphatases, but not by okadaic acid, an inhibitor of serine/threonine phosphatases. Inhibition of the enzyme reduces mycobacterial survival in infected macrophages. Inhibitors also enhance killing efficacy by first-line antibiotics. Essential virulence factor that promotes mycobacterial survival within host macrophages. Acts as a phosphatase that possesses triple substrate specificity toward phosphotyrosine, phosphoserine/threonine and phosphoinositides. Supports mycobacteria survival during infection by modulating the normal host signaling pathways, attenuating the bactericidal immune responses and promoting the host cell survival. Inhibits host pyroptosis by disrupting the membrane localization of host gasdermin-D (GSDMD): acts by catalyzing dephosphorylation of phosphatidylinositol (4,5)-bisphosphate and phosphatidylinositol 4-phosphate, thereby inhibiting the membrane targeting of GSDMD and subsequent cytokine release and pyroptosis. Inhibits host inflammatory responses and apoptosis through impeding the NF-kappa-B and MAPK signal pathways and TP53/p53 expression in the macrophage. Blocks the IL6/IL-6 production by down-regulating ERK1/2, p38 and p65 activity. Prevents macrophage cell death by activating the Akt pathway and blocking caspase 3 activity. Reduces the expression of iNOS in activated macrophages and inhibits the generation of destroying reactive nitrogen intermediate NO. This chain is Triple specificity protein phosphatase PtpB, found in Mycobacterium tuberculosis (strain ATCC 25618 / H37Rv).